We begin with the raw amino-acid sequence, 229 residues long: Heptaprenylglyceryl phosphate synthase (229 aa).

Sn-glycerol 1-phosphate is bound at residue lysine 12. Mg(2+) contacts are provided by aspartate 14 and serine 40. Sn-glycerol 1-phosphate contacts are provided by residues 159 to 164 (YLEYSG), glycine 189, and 209 to 210 (GN).

This sequence belongs to the GGGP/HepGP synthase family. Group I subfamily. Homodimer. Requires Mg(2+) as cofactor.

It carries out the reaction sn-glycerol 1-phosphate + all-trans-heptaprenyl diphosphate = 3-heptaprenyl-sn-glycero-1-phosphate + diphosphate. It participates in membrane lipid metabolism; glycerophospholipid metabolism. Its function is as follows. Prenyltransferase that catalyzes in vivo the transfer of the heptaprenyl moiety of heptaprenyl pyrophosphate (HepPP; 35 carbon atoms) to the C3 hydroxyl of sn-glycerol-1-phosphate (G1P), producing heptaprenylglyceryl phosphate (HepGP). This reaction is an ether-bond-formation step in the biosynthesis of archaea-type G1P-based membrane lipids found in Bacillales. The sequence is that of Heptaprenylglyceryl phosphate synthase from Bacillus anthracis (strain A0248).